Here is a 934-residue protein sequence, read N- to C-terminus: Serine/threonine-protein kinase KIPK1 (934 aa).

6 disordered regions span residues 20 to 40 (LPKH…KDLV), 70 to 113 (RLMS…RFVG), 189 to 227 (PLMP…FGLQ), 305 to 343 (SSSA…RPKQ), 395 to 438 (SIDD…SCNV), and 466 to 493 (EKET…DYSR). Composition is skewed to polar residues over residues 82-94 (SASA…TSPS) and 212-227 (NPIS…FGLQ). Over residues 395-421 (SIDDNPPSYTSSHNPKICTDSLSSVSN) the composition is skewed to polar residues. Positions 538–879 (FNLLKKLGCG…SVEIKRHPFF (342 aa)) constitute a Protein kinase domain. ATP contacts are provided by residues 544–552 (LGCGDIGTV) and lysine 567. The active-site Proton acceptor is the aspartate 663. The disordered stretch occupies residues 738–773 (SSNQQQGRKPKRGDHLSKTQQHLSRSLPQLVAEPTE). The segment covering 755 to 764 (KTQQHLSRSL) has biased composition (polar residues).

The protein belongs to the protein kinase superfamily. Ser/Thr protein kinase family. In terms of assembly, interacts with KCBP. Interacts with PERK8, PERK9, PERK10 and PERK13. Autophosphorylated. As to expression, expressed in roots, cauline leaves, flowers and siliques.

Its subcellular location is the cytoplasm. The protein resides in the nucleus. The enzyme catalyses L-seryl-[protein] + ATP = O-phospho-L-seryl-[protein] + ADP + H(+). It carries out the reaction L-threonyl-[protein] + ATP = O-phospho-L-threonyl-[protein] + ADP + H(+). Could be involved in the negative regulation of root growth. This Arabidopsis thaliana (Mouse-ear cress) protein is Serine/threonine-protein kinase KIPK1.